Consider the following 195-residue polypeptide: Ribonuclease HII (195 aa).

The RNase H type-2 domain maps to 6–195 (SLIAGVDEVG…KSFISRLEIN (190 aa)). The a divalent metal cation site is built by D12, E13, and D108.

It belongs to the RNase HII family. Mn(2+) is required as a cofactor. The cofactor is Mg(2+).

The protein localises to the cytoplasm. It catalyses the reaction Endonucleolytic cleavage to 5'-phosphomonoester.. Its function is as follows. Endonuclease that specifically degrades the RNA of RNA-DNA hybrids. This chain is Ribonuclease HII, found in Prochlorococcus marinus (strain NATL1A).